A 438-amino-acid polypeptide reads, in one-letter code: High-affinity gluconate transporter (438 aa).

13 helical membrane passes run 2-22, 23-43, 52-72, 108-128, 134-154, 174-194, 222-242, 258-278, 292-312, 327-347, 349-369, 370-390, and 418-438; these read PLVIVAIGVILLLLLMIRFKM, NGFIALVLVALAVGLMQGMPL, AGVGGTLGSLALIMGFGAMLG, VGFALFYEVGFVLMLPLVFTI, IPLLYVGVPMAAALSVTHGFL, TLLYGTILAIPTVILAGPVYA, FGVSVWTSLVPVVLMAMRAIA, FLGDPVMATLIAVLIAMFTFG, LVSSIKIIAMMLLIIGGGGAF, SMMHETNISPLLMAWSIAAVL, IALGSATVAAITAGGIAAPLI, ATTGVSPELMVIAVGSGSVIF, and MLETIISVCGLVGCLLLNMVI.

This sequence belongs to the GntP permease family.

Its subcellular location is the cell inner membrane. The protein operates within carbohydrate acid metabolism; D-gluconate degradation. Functionally, part of the gluconate utilization system Gnt-I; high-affinity intake of gluconate. This chain is High-affinity gluconate transporter (gntT), found in Escherichia coli (strain K12).